The primary structure comprises 631 residues: 1-deoxy-D-xylulose-5-phosphate synthase (631 aa).

Residues His-73 and 114–116 (GHS) each bind thiamine diphosphate. A Mg(2+)-binding site is contributed by Asp-145. Residues 146–147 (GA), Asn-174, Tyr-285, and Glu-366 each bind thiamine diphosphate. Mg(2+) is bound at residue Asn-174.

The protein belongs to the transketolase family. DXPS subfamily. In terms of assembly, homodimer. It depends on Mg(2+) as a cofactor. The cofactor is thiamine diphosphate.

The catalysed reaction is D-glyceraldehyde 3-phosphate + pyruvate + H(+) = 1-deoxy-D-xylulose 5-phosphate + CO2. The protein operates within metabolic intermediate biosynthesis; 1-deoxy-D-xylulose 5-phosphate biosynthesis; 1-deoxy-D-xylulose 5-phosphate from D-glyceraldehyde 3-phosphate and pyruvate: step 1/1. Its function is as follows. Catalyzes the acyloin condensation reaction between C atoms 2 and 3 of pyruvate and glyceraldehyde 3-phosphate to yield 1-deoxy-D-xylulose-5-phosphate (DXP). This is 1-deoxy-D-xylulose-5-phosphate synthase from Desulfitobacterium hafniense (strain DSM 10664 / DCB-2).